The following is a 673-amino-acid chain: Pesticin receptor (673 aa).

The N-terminal stretch at 1–22 (MKMTRLYPLALGGLLLPAIANA) is a signal peptide. The short motif at 30–37 (STLVVTAS) is the TonB box element. The TBDR plug domain maps to 41 to 155 (SRSASANNVS…QGGIINIVTQ (115 aa)). The region spanning 160–672 (TPRGYIEGGV…TVGINTRIDF (513 aa)) is the TBDR beta-barrel domain. The TonB C-terminal box motif lies at 657–673 (QVNMGRTVGINTRIDFF).

It belongs to the TonB-dependent receptor family.

The protein localises to the cell outer membrane. Its function is as follows. Receptor for the bacteriocin pesticin and for the siderophore yersiniabactin. The polypeptide is Pesticin receptor (fyuA) (Yersinia pestis).